The following is a 223-amino-acid chain: Ribosomal RNA small subunit methyltransferase G (223 aa).

S-adenosyl-L-methionine is bound by residues Gly-82, Leu-87, 133-134, and Arg-151; that span reads AE.

The protein belongs to the methyltransferase superfamily. RNA methyltransferase RsmG family.

It localises to the cytoplasm. Specifically methylates the N7 position of guanine in position 518 of 16S rRNA. This is Ribosomal RNA small subunit methyltransferase G from Corynebacterium glutamicum (strain R).